Here is a 590-residue protein sequence, read N- to C-terminus: Putative DEAD-box ATP-dependent RNA helicase 51 (590 aa).

Positions 1 to 81 (MHPIKLCARS…KQGEGKKGSG (81 aa)) are disordered. A compositionally biased stretch (polar residues) spans 40–51 (AACNSEGENNAT). The span at 59-78 (NKKMKEEKSKRKKKQGEGKK) shows a compositional bias: basic and acidic residues. Positions 86–114 (KLFSDLPISDLTANAIRDMNYTHLTEIQA) match the Q motif motif. In terms of domain architecture, Helicase ATP-binding spans 117-293 (IPPLMLGSDV…KLTFGSKEER (177 aa)). Position 130 to 137 (130 to 137 (AKTGSGKT)) interacts with ATP. The DEAD box motif lies at 240-243 (DEAD). Residues 329–481 (VLYAFLKKAL…ELVPKLQPYL (153 aa)) form the Helicase C-terminal domain. A disordered region spans residues 549 to 590 (LESSASKHRKKRNVNTGRRHGIGPSNPYGRKGSDDRRQFARF). Residues 554 to 569 (SKHRKKRNVNTGRRHG) show a composition bias toward basic residues. Basic and acidic residues predominate over residues 579 to 590 (KGSDDRRQFARF).

The protein belongs to the DEAD box helicase family. DDX18/HAS1 subfamily.

It carries out the reaction ATP + H2O = ADP + phosphate + H(+). The chain is Putative DEAD-box ATP-dependent RNA helicase 51 from Oryza sativa subsp. japonica (Rice).